Reading from the N-terminus, the 945-residue chain is Netrin receptor UNC5B (945 aa).

Residues 1–26 form the signal peptide; it reads MGARSGARGALLLALLLCWDPRLSQA. Over 27-377 the chain is Extracellular; that stretch reads GTDSGSEVLP…LEASGDAALY (351 aa). The Ig-like domain maps to 48–145; it reads PYFLQEPQDA…AGTTKSRRAY (98 aa). Intrachain disulfides connect Cys69–Cys130, Cys81–Cys128, Cys174–Cys225, Cys258–Cys295, Cys262–Cys299, Cys273–Cys285, Cys314–Cys348, Cys318–Cys353, and Cys326–Cys338. The region spanning 147 to 242 is the Ig-like C2-type domain; it reads RIAYLRKNFD…KRRSTTATVI (96 aa). N-linked (GlcNAc...) asparagine glycosylation is present at Asn222. TSP type-1 domains follow at residues 246–300 and 302–354; these read NGGW…TICP and DGAW…GLCM. N-linked (GlcNAc...) asparagine glycosylation occurs at Asn347. The helical transmembrane segment at 378–398 threads the bilayer; the sequence is AGLVVAIFVVVAILMAVGVVV. Topologically, residues 399–945 are cytoplasmic; that stretch reads YRRNCRDFDT…LVAVATDGDC (547 aa). Cys403 carries the S-palmitoyl cysteine lipid modification. Residues 543–686 form the ZU5 domain; the sequence is SSVSGTFGCL…LGTYVFTGES (144 aa). Tyr581 bears the Phosphotyrosine mark. The tract at residues 689–838 is UPA domain; it reads RSAVKRLQLA…AETPAGSLDT (150 aa). The segment at 707-725 is interaction with DCC; that stretch reads SLEYSLRVYCLEDTPVALK. Residues 865 to 943 enclose the Death domain; the sequence is KICNSLDAPN…EMLVAVATDG (79 aa).

The protein belongs to the unc-5 family. In terms of assembly, interacts with the cytoplasmic part of DCC. Interacts with GNAI2 via its cytoplasmic part. Interacts (via death domain) with DAPK1 (via death domain). Interacts (via extracellular domain) with FLRT3 (via extracellular domain); the interaction is direct. Interacts (via extracellular domain) with FLRT2 and FLRT3 (via extracellular domain), but has higher affinity for FLRT3. Identified in a complex with FLRT3 and ADGRL3; does not interact with ADGRL3 by itself. In terms of processing, phosphorylated on cytoplasmic tyrosine residues. Post-translationally, proteolytically cleaved by caspases during apoptosis. The cleavage does not take place when the receptor is associated with netrin ligand. Its cleavage by caspases is required to induce apoptosis. Palmitoylation is required for pro-apoptotic activity, but not for location at lipid rafts. Highly expressed in brain. Also expressed at lower level in developing lung, cartilage, kidney and hematopoietic and immune tissues.

It localises to the cell membrane. The protein localises to the membrane raft. Functionally, receptor for netrin required for axon guidance. Mediates axon repulsion of neuronal growth cones in the developing nervous system upon ligand binding. Axon repulsion in growth cones may be caused by its association with DCC that may trigger signaling for repulsion. Functions as a netrin receptor that negatively regulates vascular branching during angiogenesis. Mediates retraction of tip cell filopodia on endothelial growth cones in response to netrin. It also acts as a dependence receptor required for apoptosis induction when not associated with netrin ligand. Mediates apoptosis by activating DAPK1. In the absence of NTN1, activates DAPK1 by reducing its autoinhibitory phosphorylation at Ser-308 thereby increasing its catalytic activity. The polypeptide is Netrin receptor UNC5B (UNC5B) (Homo sapiens (Human)).